A 382-amino-acid polypeptide reads, in one-letter code: Ribosomal RNA large subunit methyltransferase G (382 aa).

This sequence belongs to the methyltransferase superfamily. RlmG family.

Its subcellular location is the cytoplasm. It carries out the reaction guanosine(1835) in 23S rRNA + S-adenosyl-L-methionine = N(2)-methylguanosine(1835) in 23S rRNA + S-adenosyl-L-homocysteine + H(+). In terms of biological role, specifically methylates the guanine in position 1835 (m2G1835) of 23S rRNA. This is Ribosomal RNA large subunit methyltransferase G from Aliivibrio fischeri (strain ATCC 700601 / ES114) (Vibrio fischeri).